A 940-amino-acid polypeptide reads, in one-letter code: Mitogen-activated protein kinase kinase kinase 10 (940 aa).

Positions 16–81 constitute an SH3 domain; it reads PAGPVWTAVF…PSNYVAPAAP (66 aa). Positions 98-360 constitute a Protein kinase domain; the sequence is LQLEEIIGVG…GSILKQLEVI (263 aa). ATP contacts are provided by residues 104–112 and K125; that span reads IGVGGFGKV. The active-site Proton acceptor is D222. T258 carries the phosphothreonine; by autocatalysis modification. Residue S262 is modified to Phosphoserine; by autocatalysis and MAP4K1. Leucine-zipper stretches follow at residues 384 to 405 and 419 to 440; these read IQHMFDDLRTKEKELRSREEEL and LRRREQELAEREMDIVERELHL. Disordered stretches follow at residues 490 to 599, 687 to 734, and 749 to 917; these read PTLD…MAPG, RAGD…GLAP, and STRS…QPTL. 3 positions are modified to phosphoserine: S498, S502, and S506. The segment covering 501–511 has biased composition (low complexity); the sequence is ASPPASPSIIP. T552 bears the Phosphothreonine mark. Composition is skewed to basic and acidic residues over residues 560-572 and 687-698; these read QKERAGGEERLKA and RAGDGEEQRRWL. The span at 765–775 shows a compositional bias: pro residues; the sequence is APSPPPSPLAP. Residues 822–840 are compositionally biased toward basic and acidic residues; that stretch reads LRQREPLELTNHGPRDPLD. R843 is modified (omega-N-methylarginine). A compositionally biased stretch (pro residues) spans 899–913; sequence PSRPDTPESPGPPSV.

The protein belongs to the protein kinase superfamily. STE Ser/Thr protein kinase family. MAP kinase kinase kinase subfamily. In terms of assembly, homodimer. Interacts with SH3RF2. Mg(2+) serves as cofactor. In terms of processing, autophosphorylation on serine and threonine residues within the activation loop plays a role in enzyme activation.

The catalysed reaction is L-seryl-[protein] + ATP = O-phospho-L-seryl-[protein] + ADP + H(+). The enzyme catalyses L-threonyl-[protein] + ATP = O-phospho-L-threonyl-[protein] + ADP + H(+). Its activity is regulated as follows. Homodimerization via the leucine zipper domains is required for autophosphorylation and subsequent activation. Its function is as follows. Activates the JUN N-terminal pathway. This Mus musculus (Mouse) protein is Mitogen-activated protein kinase kinase kinase 10 (Map3k10).